Reading from the N-terminus, the 165-residue chain is Probable DNA polymerase III subunit chi (165 aa).

It belongs to the DNA polymerase III chi/HolC chain family. DNA polymerase III contains a core (composed of alpha, epsilon and theta chains) that associates with a tau subunit. This core dimerizes to form the POLIII' complex. PolIII' associates with the gamma complex (composed of gamma, delta, delta', psi and chi chains) and with the beta chain to form the complete DNA polymerase III complex. Interacts directly with the psi subunit (holD). The only subunit of the DNA polymerase III holoenzyme known to interact with single-stranded DNA binding protein (SSB).

The catalysed reaction is DNA(n) + a 2'-deoxyribonucleoside 5'-triphosphate = DNA(n+1) + diphosphate. Its function is as follows. Part of the beta sliding clamp loading complex, which hydrolyzes ATP to load the beta clamp onto primed DNA to form the DNA replication pre-initiation complex. DNA polymerase III is a complex, multichain enzyme responsible for most of the replicative synthesis in bacteria. This DNA polymerase also exhibits 3' to 5' exonuclease activity. This is Probable DNA polymerase III subunit chi from Rickettsia prowazekii (strain Madrid E).